The chain runs to 628 residues: MAVLPLLLCLLPLAPASSPSQPATPSPCPRRCRCQTQSLPLSVLCPGAGLLFVPPSLDRRAAELRLADNFIAAVRRRDLANMTGLLHLSLSRNTIRHVAAGAFADLRALRALHLDGNRLTSLGEGQLRGLVNLRHLILSNNQLAALAAGALDDCAETLEDLDLSYNNLEQLPWEALGRLGNVNTLGLDHNLLASVPAGAFSRLHKLARLDMTSNRLTTIPPDPLFSRLPLLARPRGSPASALVLAFGGNPLHCNCELVWLRRLAREDDLEACASPPALGGRYFWAVGEEEFVCEPPVVTHRSPPLAVPAGRPAALRCRAVGDPEPRVRWVSPQGRLVGNSSRARAFPNGTLELLVTEPGDGGIFTCIAANAAGEATAAVELTVGPPPPPQLANSTSCDPPRDGDPDALTPPSAASASAAAKAADTGPPTDRGVQVTEHGATAALVQWPDQRPIPGIRMYQIQYNSSADDILVYRMIPADSHSFLLSDLASGRTYDLCVLAVYEDGATGLTATRPVGCARFSTEPALRPCGAPHAPFLGGTMIIALGGVIVASVLVFIFVLLMRYKVHGGQPPGKAKAPAPVSSVCLQTNGSLGPTPAPPAPEPAAPRAHTVVQLDCEPWRPSHEPTGP.

An N-terminal signal peptide occupies residues 1–16; that stretch reads MAVLPLLLCLLPLAPA. Over 17 to 540 the chain is Extracellular; the sequence is SSPSQPATPS…APHAPFLGGT (524 aa). One can recognise an LRRNT domain in the interval 19 to 59; it reads PSQPATPSPCPRRCRCQTQSLPLSVLCPGAGLLFVPPSLDR. LRR repeat units lie at residues 84–105, 108–129, 132–153, 157–178, 181–202, and 205–226; these read GLLH…AFAD, ALRA…QLRG, NLRH…ALDD, TLED…ALGR, NVNT…AFSR, and KLAR…PLFS. The LRRCT domain occupies 249-295; the sequence is NPLHCNCELVWLRRLAREDDLEACASPPALGGRYFWAVGEEEFVCEP. An Ig-like domain is found at 295 to 382; it reads PPVVTHRSPP…GEATAAVELT (88 aa). C317 and C366 form a disulfide bridge. Residues N348 and N393 are each glycosylated (N-linked (GlcNAc...) asparagine). Positions 380-432 are disordered; the sequence is ELTVGPPPPPQLANSTSCDPPRDGDPDALTPPSAASASAAAKAADTGPPTDRG. A compositionally biased stretch (low complexity) spans 406 to 429; it reads DALTPPSAASASAAAKAADTGPPT. Residues 427–525 enclose the Fibronectin type-III domain; sequence PPTDRGVQVT…GCARFSTEPA (99 aa). The chain crosses the membrane as a helical span at residues 541–561; that stretch reads MIIALGGVIVASVLVFIFVLL. Residues 562 to 628 lie on the Cytoplasmic side of the membrane; sequence MRYKVHGGQP…WRPSHEPTGP (67 aa). The interval 587 to 628 is disordered; that stretch reads QTNGSLGPTPAPPAPEPAAPRAHTVVQLDCEPWRPSHEPTGP. Pro residues predominate over residues 595 to 604; sequence TPAPPAPEPA. The span at 617–628 shows a compositional bias: basic and acidic residues; the sequence is EPWRPSHEPTGP.

This sequence belongs to the LRFN family. Can form heteromeric complexes with LRFN1, LRFN2, LRFN4 and LRFN5. Able to form homomeric complexes across cell junctions, between adjacent cells. Does not interact with DLG4. Post-translationally, N-glycosylated.

Its subcellular location is the cell membrane. The protein localises to the cell projection. It localises to the axon. The protein resides in the dendrite. It is found in the synapse. Its subcellular location is the presynaptic cell membrane. The protein localises to the postsynaptic cell membrane. Cell adhesion molecule that mediates homophilic cell-cell adhesion in a Ca(2+)-independent manner. Promotes neurite outgrowth in hippocampal neurons. The protein is Leucine-rich repeat and fibronectin type-III domain-containing protein 3 (LRFN3) of Ailuropoda melanoleuca (Giant panda).